Consider the following 94-residue polypeptide: Serine protease inhibitor Kazal-type 13 (94 aa).

A signal peptide spans 1–23 (MAAFPHKIIFFLVCSTLTHVAFS). The region spanning 33 to 94 (RWPKPRCKMY…IKFEKYGKCD (62 aa)) is the Kazal-like domain. Intrachain disulfides connect Cys39–Cys75, Cys53–Cys72, and Cys61–Cys93. The N-linked (GlcNAc...) asparagine glycan is linked to Asn55.

The protein resides in the secreted. In terms of biological role, may be a serine protease inhibitor. Essential for sperm maturation and fertility. Inhibits sperm acrosome reaction, protecting sperm from premature reaction. The chain is Serine protease inhibitor Kazal-type 13 (SPINK13) from Homo sapiens (Human).